The primary structure comprises 216 residues: ATP synthase subunit a (216 aa).

Helical transmembrane passes span 1-21 (MEYS…IFVL), 62-82 (LIAA…VPGF), 88-108 (NINT…FEGF), 119-139 (FMGP…ISHI), 149-169 (LFAN…LVIK), 174-194 (LVVS…AIFI), and 196-216 (TYIF…HEEH).

This sequence belongs to the ATPase A chain family. F-type ATPases have 2 components, CF(1) - the catalytic core - and CF(0) - the membrane proton channel. CF(1) has five subunits: alpha(3), beta(3), gamma(1), delta(1), epsilon(1). CF(0) has three main subunits: a(1), b(2) and c(9-12). The alpha and beta chains form an alternating ring which encloses part of the gamma chain. CF(1) is attached to CF(0) by a central stalk formed by the gamma and epsilon chains, while a peripheral stalk is formed by the delta and b chains.

It localises to the cell inner membrane. In terms of biological role, key component of the proton channel; it plays a direct role in the translocation of protons across the membrane. This Aquifex aeolicus (strain VF5) protein is ATP synthase subunit a.